Consider the following 123-residue polypeptide: MGYRKLGRTSDQRKAMLRDLATSLIVSERIETTEARAKEVRSVVEKLITLGKKGDLASRRNAAKTLRNVEILNEDETTQTALQKLFGEIAERYTERQGGYTRILKVGPRRGDGAESVIIELVD.

Belongs to the bacterial ribosomal protein bL17 family. As to quaternary structure, part of the 50S ribosomal subunit. Contacts protein L32.

The chain is Large ribosomal subunit protein bL17 from Staphylococcus haemolyticus (strain JCSC1435).